The chain runs to 354 residues: 3'-5' exonuclease (354 aa).

Residues 1-120 form a disordered region; it reads MERYLTKMPI…PSPEKEKPEK (120 aa). Positions 13–50 are enriched in basic and acidic residues; sequence KANEVPKKEAFAKKETPKVARKATKTDTPKELKDKENA. The segment covering 59–70 has biased composition (basic residues); it reads TKGRPGRPAAKR. The segment covering 71-91 has biased composition (basic and acidic residues); that stretch reads KNLDTPDVKDEKIAMEEENPP. Phosphoserine occurs at positions 104, 110, and 112. A 3'-5' exonuclease domain is found at 149–314; that stretch reads WVEKQKDDVV…GQVIYRELER (166 aa). Mg(2+)-binding residues include D163, E165, and D301.

Belongs to the WRNexo family.

The protein resides in the nucleus. Its function is as follows. Has exonuclease activity on both single-stranded and duplex templates bearing overhangs, but not blunt ended duplex DNA, and cleaves in a 3'-5' direction. Essential for the formation of DNA replication focal centers. Has an important role in maintaining genome stability. This chain is 3'-5' exonuclease, found in Drosophila sechellia (Fruit fly).